A 144-amino-acid chain; its full sequence is Large ribosomal subunit protein uL16 (144 aa).

Positions 1-19 are enriched in basic residues; it reads MLLPKRVKYRRQHRPKTTG. Positions 1-23 are disordered; it reads MLLPKRVKYRRQHRPKTTGRSKG.

Belongs to the universal ribosomal protein uL16 family. As to quaternary structure, part of the 50S ribosomal subunit.

Its function is as follows. Binds 23S rRNA and is also seen to make contacts with the A and possibly P site tRNAs. The protein is Large ribosomal subunit protein uL16 of Staphylococcus carnosus (strain TM300).